A 201-amino-acid polypeptide reads, in one-letter code: Peroxiredoxin prdx-2 (201 aa).

Residues alanine 10–phenylalanine 168 form the Thioredoxin domain. Cysteine 55 functions as the Cysteine sulfenic acid (-SOH) intermediate in the catalytic mechanism.

This sequence belongs to the peroxiredoxin family. AhpC/Prx1 subfamily. As to quaternary structure, monomer and homodimer; disulfide-linked. Under nonstress conditions, present in the reduced monomeric form. Forms active hyperoxidized monomers and disulfide-linked homodimers upon oxidation by hydrogen peroxide. Forms active oxidized homodimers in response to the drug metformin. Post-translationally, the enzyme can be inactivated by further oxidation of the cysteine sulfenic acid (C(P)-SOH) to sulphinic acid (C(P)-SO2H) instead of its condensation to a disulfide bond. As to expression, expressed in the gonad, neurons and intestine (at protein level). Expressed in the pharyngeal inter-neuron I4 and the sensory interneuron I2. Expressed in the intestine, pharyngeal muscle 1, vulval muscle, body wall muscle, epithelial cells e1 and e3, and neurons in the head and tail.

The protein localises to the cytoplasm. The enzyme catalyses a hydroperoxide + [thioredoxin]-dithiol = an alcohol + [thioredoxin]-disulfide + H2O. Activated following oxidation of the conserved redox-active cysteine residue, which subsequently allows for the oxidation and activation of substrates. Thiol-specific peroxidase that catalyzes the reduction of hydrogen peroxide and organic hydroperoxides to water and alcohols, respectively. In I2 pharyngeal neurons, required for the inhibition of feeding in response to light and hydrogen peroxide. In the intestine, plays a role in protecting cells against oxidative stress by detoxifying peroxides such as hydrogen peroxide. In addition, plays a role in the recovery from oxidative stress induced by hydrogen peroxide. In its hyperoxidized form (induced by hydrogen peroxide), confers protection against heat stress. However, has a low tendency for overoxidation during the normal lifespan. Increases sensitivity to cytotoxicity caused by metalloids and heavy metals such as arsenic and cadmium by playing a role in inhibiting the expression of phase II detoxification genes such as gcs-1 in intestinal cells. In addition, in response to arsenite, promotes the secretion of the insulin ligand daf-28 into the pseudocoelom, which negatively regulates the activities of daf-16 and skn-1. Plays a role in promoting longevity. Plays a role in the mitohormetic pathway by promoting the activation of pmk-1 in response to the drug metformin. This Caenorhabditis elegans protein is Peroxiredoxin prdx-2.